We begin with the raw amino-acid sequence, 453 residues long: Na(+)/H(+) antiporter NhaA (453 aa).

11 consecutive transmembrane segments (helical) span residues 22-42 (ASLLLFAATIVAMVLANSPWA), 72-92 (MLAFVNDALMAVFFFVIGLEI), 108-128 (LLPIIAACGGMIVPVLFYMLV), 137-157 (GAAIPMATDIAFALAVLGLLG), 166-186 (IFLTALAVVDDIGGIIIIALF), 189-209 (GHIAFEPLLISLIVLALLYVG), 218-238 (LFFYIGGFIVWLLFLESGIHP), 316-336 (PLVNYVILPLFAFVNAGVTFG), 343-363 (LVNVPLAVFVGLFVGKTLGIF), 386-406 (LFGVSMLGGIGFTVALFIANL), and 424-444 (LGVFTGSFISGLCGYLVLKWV).

The protein belongs to the NhaA Na(+)/H(+) (TC 2.A.33) antiporter family.

The protein localises to the cell inner membrane. It catalyses the reaction Na(+)(in) + 2 H(+)(out) = Na(+)(out) + 2 H(+)(in). In terms of biological role, na(+)/H(+) antiporter that extrudes sodium in exchange for external protons. The polypeptide is Na(+)/H(+) antiporter NhaA (Parabacteroides distasonis (strain ATCC 8503 / DSM 20701 / CIP 104284 / JCM 5825 / NCTC 11152)).